A 1578-amino-acid chain; its full sequence is Mediator of RNA polymerase II transcription subunit 14 (1578 aa).

An LXXLL motif 1 motif is present at residues 49 to 53 (LAELL). The disordered stretch occupies residues 561-582 (SQSVTAGGTSQSSAPSAATTES). The span at 565-580 (TAGGTSQSSAPSAATT) shows a compositional bias: low complexity. Residues 739–743 (LKRLL) carry the LXXLL motif 2 motif. Disordered stretches follow at residues 1009–1173 (RRRS…PDHK) and 1510–1578 (APGG…GGPN). A compositionally biased stretch (polar residues) spans 1084 to 1093 (SQSHPNFNMT). 2 stretches are compositionally biased toward pro residues: residues 1095–1104 (PPAPHMPHPS) and 1157–1167 (PGMPRPSPRPG). Gly residues-rich tracts occupy residues 1510–1521 (APGGPGGPGPMG) and 1547–1578 (MGGG…GGPN).

It belongs to the Mediator complex subunit 14 family. Component of the Mediator complex.

The protein localises to the nucleus. Its function is as follows. Component of the Mediator complex, a coactivator involved in the regulated transcription of nearly all RNA polymerase II-dependent genes. Mediator functions as a bridge to convey information from gene-specific regulatory proteins to the basal RNA polymerase II transcription machinery. Mediator is recruited to promoters by direct interactions with regulatory proteins and serves as a scaffold for the assembly of a functional preinitiation complex with RNA polymerase II and the general transcription factors. The chain is Mediator of RNA polymerase II transcription subunit 14 (MED14) from Aedes aegypti (Yellowfever mosquito).